The chain runs to 906 residues: Protein translocase subunit SecA (906 aa).

ATP is bound by residues Gln-86, 104–108 (GEGKT), and Asp-499. The disordered stretch occupies residues 865–885 (VSRIDPKDRNPEDPTSWGRVS). Residues Cys-890, Cys-892, Cys-901, and His-902 each coordinate Zn(2+).

This sequence belongs to the SecA family. As to quaternary structure, monomer and homodimer. Part of the essential Sec protein translocation apparatus which comprises SecA, SecYEG and auxiliary proteins SecDF-YajC and YidC. Requires Zn(2+) as cofactor.

It is found in the cell inner membrane. The protein resides in the cytoplasm. It catalyses the reaction ATP + H2O + cellular proteinSide 1 = ADP + phosphate + cellular proteinSide 2.. In terms of biological role, part of the Sec protein translocase complex. Interacts with the SecYEG preprotein conducting channel. Has a central role in coupling the hydrolysis of ATP to the transfer of proteins into and across the cell membrane, serving both as a receptor for the preprotein-SecB complex and as an ATP-driven molecular motor driving the stepwise translocation of polypeptide chains across the membrane. The polypeptide is Protein translocase subunit SecA (Rickettsia canadensis (strain McKiel)).